The following is a 126-amino-acid chain: Protein chibby homolog 1 (126 aa).

Over residues 1-10 (MPFFGNTFSP) the composition is skewed to polar residues. Residues 1 to 26 (MPFFGNTFSPKKTPPRKSASLSNLHS) are disordered. Ser9 and Ser20 each carry phosphoserine. Residues 60–112 (IAETGVSGGVDRREVQRLRRRNQQLEEENNLLRLKVDILLDMLSESTAESHLM) are minimal region for the interaction with PKD2. Positions 67–125 (GGVDRREVQRLRRRNQQLEEENNLLRLKVDILLDMLSESTAESHLMEKELDELRISRKR) form a coiled coil. Residues 77 to 98 (LRRRNQQLEEENNLLRLKVDIL) form a leucine-zipper; mediates homodimerization region.

Belongs to the chibby family. As to quaternary structure, homodimer. Homodimerization is essential for nuclear localization and interaction with KPNA4 but is dispensable for interaction with CTNNB1. Interacts with polycystin-2/PKD2 and GM130. Interacts with the C-terminal region of CTNNB1. Interacts (C-terminus) with TCIM (C-terminus), TCIM competes with CTNNB1 for the interaction with CBY1. Interacts with FAM92A; this interaction facilitates targeting of FAM92A to cilium basal body. Interacts with CIBAR2. Interacts with KPNA4. Widely expressed. Expressed at higher levels in heart, skeletal muscle, kidney and placenta. Also found in brain, lung, liver and testis. Significantly down-regulated in thyroid and metastatic uterine tumors.

The protein localises to the nucleus speckle. It is found in the cytoplasm. It localises to the cytoskeleton. The protein resides in the cilium basal body. Its subcellular location is the microtubule organizing center. The protein localises to the centrosome. It is found in the centriole. It localises to the golgi apparatus. The protein resides in the trans-Golgi network. Its subcellular location is the cell projection. The protein localises to the cilium. It is found in the flagellum. It localises to the nucleus. Functionally, inhibits the Wnt/Wingless pathway by binding to CTNNB1/beta-catenin and inhibiting beta-catenin-mediated transcriptional activation through competition with TCF/LEF transcription factors. Has also been shown to play a role in regulating the intracellular trafficking of polycystin-2/PKD2 and possibly of other intracellular proteins. Promotes adipocyte and cardiomyocyte differentiation. The sequence is that of Protein chibby homolog 1 (CBY1) from Homo sapiens (Human).